Reading from the N-terminus, the 284-residue chain is Tryptophan 2,3-dioxygenase (284 aa).

Residues Phe51–His55, Tyr113, and Arg117 contribute to the substrate site. His240 provides a ligand contact to heme. Thr254 contributes to the substrate binding site.

The protein belongs to the tryptophan 2,3-dioxygenase family. In terms of assembly, homotetramer. Heme serves as cofactor.

It catalyses the reaction L-tryptophan + O2 = N-formyl-L-kynurenine. It functions in the pathway amino-acid degradation; L-tryptophan degradation via kynurenine pathway; L-kynurenine from L-tryptophan: step 1/2. Heme-dependent dioxygenase that catalyzes the oxidative cleavage of the L-tryptophan (L-Trp) pyrrole ring and converts L-tryptophan to N-formyl-L-kynurenine. Catalyzes the oxidative cleavage of the indole moiety. This is Tryptophan 2,3-dioxygenase from Rhodococcus jostii (strain RHA1).